Consider the following 179-residue polypeptide: Shikimate kinase (179 aa).

Position 11–16 (11–16 (GAGKTT)) interacts with ATP. Threonine 15 contacts Mg(2+). Residues aspartate 33, arginine 57, and glycine 79 each coordinate substrate. Arginine 118 lines the ATP pocket. A substrate-binding site is contributed by arginine 140.

This sequence belongs to the shikimate kinase family. Monomer. Requires Mg(2+) as cofactor.

The protein resides in the cytoplasm. The catalysed reaction is shikimate + ATP = 3-phosphoshikimate + ADP + H(+). Its pathway is metabolic intermediate biosynthesis; chorismate biosynthesis; chorismate from D-erythrose 4-phosphate and phosphoenolpyruvate: step 5/7. Catalyzes the specific phosphorylation of the 3-hydroxyl group of shikimic acid using ATP as a cosubstrate. This is Shikimate kinase from Bacteroides fragilis (strain ATCC 25285 / DSM 2151 / CCUG 4856 / JCM 11019 / LMG 10263 / NCTC 9343 / Onslow / VPI 2553 / EN-2).